A 715-amino-acid polypeptide reads, in one-letter code: Arginine kinase (715 aa).

Approximate repeat units lie at residues 1-366 (MADP…IAKK) and 367-715 (RSVF…KSTK). Positions 11-95 (KSKNAFPDPL…FDAIIEDYHS (85 aa)) constitute a Phosphagen kinase N-terminal 1 domain. 68–72 (GVGVY) is a substrate binding site. Positions 123-362 (YIRSTRIRVA…KALMELEKEA (240 aa)) constitute a Phosphagen kinase C-terminal 1 domain. ATP-binding positions include 126–130 (STRIR) and His-189. Substrate is bound at residue Glu-229. Arg-233 contacts ATP. Cys-275 provides a ligand contact to substrate. ATP is bound by residues 284 to 288 (RASVH) and 312 to 317 (RGIHGE). Residue Glu-317 participates in substrate binding. In terms of domain architecture, Phosphagen kinase N-terminal 2 spans 365–447 (KKRSVFPEVL…FDKIVEDYHS (83 aa)). The Phosphagen kinase C-terminal 2 domain maps to 475–714 (YIRSTRIRVA…KKLLEIEKST (240 aa)).

It belongs to the ATP:guanido phosphotransferase family. In terms of assembly, monomer.

It catalyses the reaction L-arginine + ATP = N(omega)-phospho-L-arginine + ADP + H(+). The protein is Arginine kinase of Anthopleura japonica (Sea anemone).